The primary structure comprises 205 residues: Proteasome subunit beta type-3 (205 aa).

An N-acetylserine modification is found at Ser-2. Lys-77 is subject to N6-acetyllysine.

The protein belongs to the peptidase T1B family. The 26S proteasome consists of a 20S proteasome core and two 19S regulatory subunits. The 20S proteasome core is a barrel-shaped complex made of 28 subunits that are arranged in four stacked rings. The two outer rings are each formed by seven alpha subunits, and the two inner rings are formed by seven beta subunits. The proteolytic activity is exerted by three beta-subunits PSMB5, PSMB6 and PSMB7.

The protein resides in the cytoplasm. It is found in the nucleus. Non-catalytic component of the 20S core proteasome complex involved in the proteolytic degradation of most intracellular proteins. This complex plays numerous essential roles within the cell by associating with different regulatory particles. Associated with two 19S regulatory particles, forms the 26S proteasome and thus participates in the ATP-dependent degradation of ubiquitinated proteins. The 26S proteasome plays a key role in the maintenance of protein homeostasis by removing misfolded or damaged proteins that could impair cellular functions, and by removing proteins whose functions are no longer required. Associated with the PA200 or PA28, the 20S proteasome mediates ubiquitin-independent protein degradation. This type of proteolysis is required in several pathways including spermatogenesis (20S-PA200 complex) or generation of a subset of MHC class I-presented antigenic peptides (20S-PA28 complex). This is Proteasome subunit beta type-3 (Psmb3) from Rattus norvegicus (Rat).